A 460-amino-acid polypeptide reads, in one-letter code: Beta-1,3-xylanase TXYA (460 aa).

An N-terminal signal peptide occupies residues 1 to 22 (MKKLAKMISVATLGACAFQAHA). In terms of domain architecture, GH26 spans 23-337 (LDGKLVPDQG…LSDPKFIRHS (315 aa)). Glu138 acts as the Proton donor in catalysis. Glu234 serves as the catalytic Nucleophile. The interval 347–371 (GNSDGGNGGDNGGDNGGDNGGETPE) is disordered. Over residues 348–366 (NSDGGNGGDNGGDNGGDNG) the composition is skewed to gly residues. The segment at 368–460 (ETPENCTDDF…TVTFTNQVCN (93 aa)) is carbohydrate binding module (CBM). 2 cysteine pairs are disulfide-bonded: Cys373–Cys459 and Cys404–Cys409.

It belongs to the glycosyl hydrolase 26 family.

The enzyme catalyses Random hydrolysis of (1-&gt;3)-beta-D-glycosidic linkages in (1-&gt;3)-beta-D-xylans.. Its activity is regulated as follows. Completely inhibited by Cu(2+), Hg(2+) and N-bromosuccinimide. Strongly inhibited by Ag(+), Zn(2+) and Pb(2+). Moderately inhibited by Fe(3+), Al(3+), Mn(2+), dithiothreitol and p-chloromercuribenzoic acid. Slightly activated by Mg(2+) and Ca(2+). Unaffected by Na(+), K(+), Ba(2+), EDTA, iodoacetic acid and N-ethylmalaimide. Catalyzes the hydrolysis of beta-1,3-xylan into oligosaccharides, mainly xylotriose and xylobiose with smaller amounts of xylotetraose, xylose, xylopentaose and xylohexaose. Weakly active toward beta-1,3-xylotriose, yielding xylose and xylobiose. Converts beta-1,3-xylotetraose into xylotriose, xylobiose and xylose. Converts beta-1,3-xylopentaose into xylotetraose, xylotriose, xylobiose and xylose. Does not hydrolyze xylobiose, p-nitrophenyl-beta-xyloside, beta-1,4-xylan, curdlan or carboxymethylcellulose. In Vibrio sp, this protein is Beta-1,3-xylanase TXYA.